A 145-amino-acid polypeptide reads, in one-letter code: Large ribosomal subunit protein uL15 (145 aa).

Basic residues-rich tracts occupy residues 1–13 (MIRKTKKIRKQRG) and 22–33 (TKKRRGAGHRGG). A disordered region spans residues 1 to 41 (MIRKTKKIRKQRGSRSVGGGCTKKRRGAGHRGGRGQAGGNK).

The protein belongs to the universal ribosomal protein uL15 family. As to quaternary structure, part of the 50S ribosomal subunit.

Functionally, binds to the 23S rRNA. This is Large ribosomal subunit protein uL15 from Methanosphaera stadtmanae (strain ATCC 43021 / DSM 3091 / JCM 11832 / MCB-3).